Here is a 327-residue protein sequence, read N- to C-terminus: L-lactate dehydrogenase 1 (327 aa).

NAD(+) is bound by residues valine 21, aspartate 42, lysine 47, tyrosine 72, and 86–87 (GA). Substrate is bound by residues glutamine 89, arginine 95, and 127-130 (NPVD). NAD(+) is bound by residues 125 to 127 (AAN) and serine 150. 155–158 (DSAR) provides a ligand contact to substrate. Arginine 160 and histidine 175 together coordinate beta-D-fructose 1,6-bisphosphate. Histidine 182 (proton acceptor) is an active-site residue. Position 227 is a phosphotyrosine (tyrosine 227). Threonine 236 is a substrate binding site.

This sequence belongs to the LDH/MDH superfamily. LDH family. Homotetramer.

The protein resides in the cytoplasm. It catalyses the reaction (S)-lactate + NAD(+) = pyruvate + NADH + H(+). It participates in fermentation; pyruvate fermentation to lactate; (S)-lactate from pyruvate: step 1/1. Its activity is regulated as follows. Allosterically activated by fructose 1,6-bisphosphate (FBP). Functionally, catalyzes the conversion of lactate to pyruvate. The protein is L-lactate dehydrogenase 1 of Enterococcus faecalis (strain ATCC 700802 / V583).